Here is a 150-residue protein sequence, read N- to C-terminus: Large ribosomal subunit protein bL9 (150 aa).

This sequence belongs to the bacterial ribosomal protein bL9 family.

Its function is as follows. Binds to the 23S rRNA. The chain is Large ribosomal subunit protein bL9 from Corynebacterium jeikeium (strain K411).